The sequence spans 453 residues: Tol-Pal system protein TolB (453 aa).

Positions 1–31 (MINNLSISMTKVIKIILAIIIILFNTLSIFA) are cleaved as a signal peptide.

Belongs to the TolB family. The Tol-Pal system is composed of five core proteins: the inner membrane proteins TolA, TolQ and TolR, the periplasmic protein TolB and the outer membrane protein Pal. They form a network linking the inner and outer membranes and the peptidoglycan layer.

Its subcellular location is the periplasm. Functionally, part of the Tol-Pal system, which plays a role in outer membrane invagination during cell division and is important for maintaining outer membrane integrity. This is Tol-Pal system protein TolB from Orientia tsutsugamushi (strain Ikeda) (Rickettsia tsutsugamushi).